Here is a 284-residue protein sequence, read N- to C-terminus: uncharacterized protein (284 aa).

This sequence belongs to the AtsA family.

This is an uncharacterized protein from Mycobacterium leprae (strain TN).